We begin with the raw amino-acid sequence, 341 residues long: Acetylpolyamine amidohydrolase (341 aa).

His-157 acts as the Proton donor/acceptor in catalysis. Zn(2+) contacts are provided by Asp-192, His-194, and Asp-281.

The protein belongs to the histone deacetylase family. As to quaternary structure, homodimer. It depends on Zn(2+) as a cofactor.

The catalysed reaction is N-acetylputrescine + H2O = putrescine + acetate. The enzyme catalyses N-acetylcadaverine + H2O = cadaverine + acetate. It functions in the pathway amine and polyamine metabolism. In terms of biological role, involved in polyamine metabolism. Catalyzes the deacetylation of various acetylated polyamines such as N-acetylputrescine and N-acetylcadaverine. This chain is Acetylpolyamine amidohydrolase, found in Burkholderia pseudomallei (strain 1710b).